Consider the following 148-residue polypeptide: Lysozyme C (148 aa).

A signal peptide spans 1-18 (MKALIILGLVLLSVMVQA). Residues 19–148 (KVFERCELAR…LRQYIQGCGV (130 aa)) enclose the C-type lysozyme domain. 4 disulfide bridges follow: Cys24–Cys146, Cys48–Cys134, Cys83–Cys99, and Cys95–Cys113. Active-site residues include Glu53 and Asp71.

The protein belongs to the glycosyl hydrolase 22 family. In terms of assembly, monomer.

It is found in the secreted. It catalyses the reaction Hydrolysis of (1-&gt;4)-beta-linkages between N-acetylmuramic acid and N-acetyl-D-glucosamine residues in a peptidoglycan and between N-acetyl-D-glucosamine residues in chitodextrins.. In terms of biological role, lysozymes have primarily a bacteriolytic function; those in tissues and body fluids are associated with the monocyte-macrophage system and enhance the activity of immunoagents. This chain is Lysozyme C (LYZ), found in Hylobates lar (Lar gibbon).